A 1359-amino-acid chain; its full sequence is MALGDLMASRLVHSSSSSAAPSAALPNHHTNHLVDDHLPVENGPDPRRDVPDEEPPPPPPPQVALLPQVVVLCEQRHEGFDEAAAAAAGPSTSGPVSKWRPKDRMKTGCVALVLCLNISVDPPDVIKISPCARKECWIDPFSMAPPKALETIGKTLHSQYERWQPKARYKLQLDPTLEEVKKLCNTCRKFARTERVLFHYNGHGVPKPTANGEIWVFNKSYTQYIPLPITDLDSWLKTPSIYVFDCSAAGMIVKAFLERLDWSSSSSASSSKDCILLAACEAHQTLPQSAEFPADVFTACLTTPIKMALHWFCNRSLLRDSMEHNLIDQIPGRQNDRKTLLGELNWIFTAITDTIAWNVLPHDLFQRLFRQDLLVASLFRNFLLAERIMRSANCSPISYPLLPPTHQHHMWDAWDMAAEICLSKLPQLIADPNAEFQPSPFFTEQLTAFEVWLDHGSEDKKPPEQLPIVLQVLLSQSHRFRALVLLGRFLDMGPWAVDLALSVGIFPYVLKLLQTSAMELRQILVFIWTKILSLDKSCQVDLVKDGGHAYFIRFLDSLDAYPEQRAMAAFVLAVIVDGHRIGQEACANAGLIDVCLRHLQPENPNDAQTEPLLLQWLCLCLGKLWEDFPEAQLLGLQSNAPEIVICLLSEPQPEVRASAVFALGNLVDIGSPSLNGADDDSDDDEKVRAEINVVRSLLQISSDGSPLVRSEVAVALTRFAMGHNKHIKSVAAEYWKPQTNSLLKSLPSLANINSSNVYSPSSLIQGSSGLASHIGPVLRVGSDNSATARDGRISTSSPIATNSIMHGSPQSDDSSQHSDSGILLRENASNGGLNYSRSRPIDNGIYSQFIATMCNVAKDPYPRIASIGKRALSLIGVEQVSMRNSRLSNGGAHPGETSVPPSSNFGMARSSSWFDMNSGNFSVAFRTPPVSPPQHDYLTGLRRVCSMEFRPHVLNSPDGLADPLLSSSAAPSNMGLYILPQSLIYRWSCGHFSRPLLTGSDDNEEANARREERERIAMDCIAKCQRSSCKMTSQIASWDTRFELGTKASLLLPFSPIVVAADENEQIRVWNYDDALPVNTFENHKLSDRGLSKLLLINELDDSLLLVGSSDGNVRIWRNYTQKGGQKLVTAFSSVQGYRSAGRSIVFDWQQQSGYLYASGDMSSILVWDLDKEQVNTIQSTADSGISALSASQVRCGQFAAGFLDASVRIFDVRTPDRLVYTARPHAPRSEKVVGIGFQPGFDPYKIVSASQAGDIQFLDVRRASEPYLTIEAHRGSLTALAVHRHAPVIASGSAKQMIKVFSLEGEQLTIIRYQPSFMGQRIGSVNCLSFHRYKSLLAAGAGDNALVSIYAEDNYQVR.

Disordered stretches follow at residues 17 to 64 (SSAA…PQVA) and 782 to 819 (SDNS…QHSD). Residues 32–50 (HLVDDHLPVENGPDPRRDV) show a composition bias toward basic and acidic residues. The segment covering 782 to 805 (SDNSATARDGRISTSSPIATNSIM) has biased composition (polar residues). The span at 806 to 819 (HGSPQSDDSSQHSD) shows a compositional bias: low complexity. WD repeat units lie at residues 1041–1080 (RFEL…PVNT), 1087–1127 (SDRG…GGQK), 1139–1178 (RSAG…VNTI), 1181–1221 (TADS…RLVY), 1228–1269 (PRSE…EPYL), 1273–1312 (AHRG…LTII), and 1321–1359 (QRIG…YQVR).

The protein belongs to the WD repeat RAPTOR family. In terms of assembly, the target of rapamycin complex 1 (TORC1) is composed of at least RAPTOR, LST8 and TOR.

Functionally, component of TORC1 complex, which is an essential cell growth regulator that controls plant development. Acts by recruiting substrates for TOR. Acts by activating transcription, protein synthesis and ribosome biogenesis, and inhibiting mRNA degradation and autophagy. The chain is Regulatory-associated protein of TOR 2 (RAPTOR2) from Oryza sativa subsp. japonica (Rice).